A 366-amino-acid chain; its full sequence is Homoserine O-acetyltransferase (366 aa).

Residues 47–349 (NAILICHALS…SGEGHDSFLL (303 aa)) enclose the AB hydrolase-1 domain. Ser-153 functions as the Nucleophile in the catalytic mechanism. Position 221 (Arg-221) interacts with substrate. Residues Asp-311 and His-344 contribute to the active site. Asp-345 is a binding site for substrate.

This sequence belongs to the AB hydrolase superfamily. MetX family. Homodimer.

It is found in the cytoplasm. It catalyses the reaction L-homoserine + acetyl-CoA = O-acetyl-L-homoserine + CoA. It participates in amino-acid biosynthesis; L-methionine biosynthesis via de novo pathway; O-acetyl-L-homoserine from L-homoserine: step 1/1. Transfers an acetyl group from acetyl-CoA to L-homoserine, forming acetyl-L-homoserine. This is Homoserine O-acetyltransferase from Leptospira interrogans serogroup Icterohaemorrhagiae serovar copenhageni (strain Fiocruz L1-130).